The primary structure comprises 215 residues: UPF0056 membrane protein BU267 (215 aa).

Transmembrane regions (helical) follow at residues 14–34, 56–76, 81–101, 120–140, 150–170, and 189–209; these read FFIG…FTTM, LILL…GISI, IAGG…QFIK, VVPL…TIVW, LFLC…CFEA, and IMGL…IGAI.

Belongs to the UPF0056 (MarC) family.

It localises to the cell membrane. This is UPF0056 membrane protein BU267 from Buchnera aphidicola subsp. Acyrthosiphon pisum (strain APS) (Acyrthosiphon pisum symbiotic bacterium).